Consider the following 271-residue polypeptide: Structure-specific endonuclease subunit slx1 (271 aa).

Residues 5-87 (NFYCCYLLKS…QNLGISRYTK (83 aa)) enclose the GIY-YIG domain. The SLX1-type zinc-finger motif lies at 180-231 (CNLCYECIESDELRANCPFTDCNSINHLTCLASSFLTEECQVLPIEGMCTKC).

Belongs to the SLX1 family. In terms of assembly, forms a heterodimer with slx4. Mg(2+) is required as a cofactor. Mn(2+) serves as cofactor.

Its subcellular location is the nucleus. The protein localises to the nucleolus. In terms of biological role, catalytic subunit of the slx1-slx4 structure-specific endonuclease that resolves DNA secondary structures generated during DNA repair and recombination. Has endonuclease activity towards branched DNA substrates, introducing single-strand cuts in duplex DNA close to junctions with ss-DNA. Has a preference for stem-loop (SL) and splayed arm Y structures. Introduces a single-strand cut in duplex DNA on the 3' side of a double-strand/single-strand junction with respect to the single-strand moving 3' to 5' away from the junction. Plays a critical role in maintaining the integrity of the ribosomal DNA (rDNA) loci, where it has a role in re-starting stalled replication forks. The complex initiates homologous recombination (HR) events, used to maintain rDNA copy number, in the rDNA repeats that are processed by a mechanism that requires rad22, but not rhp51. It is also required for suppression of methyl methanesulfonate (MMS) and UV-C irradiation hypersensitivity of the structural maintenance of chromosome (SMC) protein mutant, smc6-74, by overexpression of brc1. Has Holliday junction resolvase activity in vitro. This is Structure-specific endonuclease subunit slx1 from Schizosaccharomyces pombe (strain 972 / ATCC 24843) (Fission yeast).